We begin with the raw amino-acid sequence, 504 residues long: ATP synthase subunit alpha (504 aa).

169 to 176 (GDRQTGKT) is a binding site for ATP.

This sequence belongs to the ATPase alpha/beta chains family. F-type ATPases have 2 components, CF(1) - the catalytic core - and CF(0) - the membrane proton channel. CF(1) has five subunits: alpha(3), beta(3), gamma(1), delta(1), epsilon(1). CF(0) has three main subunits: a(1), b(2) and c(9-12). The alpha and beta chains form an alternating ring which encloses part of the gamma chain. CF(1) is attached to CF(0) by a central stalk formed by the gamma and epsilon chains, while a peripheral stalk is formed by the delta and b chains.

Its subcellular location is the cell membrane. It catalyses the reaction ATP + H2O + 4 H(+)(in) = ADP + phosphate + 5 H(+)(out). Its function is as follows. Produces ATP from ADP in the presence of a proton gradient across the membrane. The alpha chain is a regulatory subunit. The polypeptide is ATP synthase subunit alpha (Clostridium kluyveri (strain ATCC 8527 / DSM 555 / NBRC 12016 / NCIMB 10680 / K1)).